The following is a 622-amino-acid chain: Prothrombin (622 aa).

The N-terminal stretch at Met-1–Ser-24 is a signal peptide. A propeptide spanning residues Gln-25 to Arg-43 is cleaved from the precursor. Positions Ala-44–Ala-89 constitute a Gla domain. Residues Glu-49, Glu-50, Glu-57, Glu-59, Glu-62, Glu-63, Glu-68, Glu-69, Glu-72, and Glu-75 each carry the 4-carboxyglutamate modification. Cys-60 and Cys-65 are oxidised to a cystine. 11 cysteine pairs are disulfide-bonded: Cys-90–Cys-103, Cys-108–Cys-186, Cys-129–Cys-169, Cys-157–Cys-181, Cys-213–Cys-291, Cys-234–Cys-274, Cys-262–Cys-286, Cys-336–Cys-482, Cys-391–Cys-407, Cys-536–Cys-550, and Cys-564–Cys-594. 2 Kringle domains span residues Cys-108 to Cys-186 and Cys-213 to Cys-291. N-linked (GlcNAc...) (complex) asparagine glycosylation is found at Asn-121 and Asn-143. The Peptidase S1 domain occupies Ile-364–Asp-618. Residue His-406 is the Charge relay system of the active site. N-linked (GlcNAc...) (complex) asparagine glycosylation occurs at Asn-416. Asp-462 serves as the catalytic Charge relay system. Positions Ala-551–Val-573 are high affinity receptor-binding region which is also known as the TP508 peptide. Residue Ser-568 is the Charge relay system of the active site.

The protein belongs to the peptidase S1 family. Heterodimer (named alpha-thrombin) of a light and a heavy chain; disulfide-linked. Forms a heterodimer with SERPINA5. In plasma, interacts (via N-terminus) with alpha-1-microglobulin with molar ratio 1:2 and 1:1; this interaction does not prevent the activation of prothrombin to thrombin. Interacts (thrombin) with iripin-8, a serine protease inhibitor from Ixodes ricinus saliva. Interacts (thrombin) with iripin-3, a serine protease inhibitor from Ixodes ricinus saliva. Interacts (thrombin) with Anopheles albimanus salivary thrombin inhibitor anophelin; the interaction results in thrombin inhibition. Interacts (thrombin) with Anopheles gambiae salivary thrombin inhibitor anophelin; the interaction results in thrombin inhibition. Interacts (thrombin) with Amblyomma variegatum variegin; the interaction results in thrombin inhibition. Interacts (thrombin) with Xenopsylla cheopis salivary thrombin inhibitor XC-42. Interacts (thrombin) with Xenopsylla cheopis salivary thrombin inhibitor XC-43. The gamma-carboxyglutamyl residues, which bind calcium ions, result from the carboxylation of glutamyl residues by a microsomal enzyme, the vitamin K-dependent carboxylase. The modified residues are necessary for the calcium-dependent interaction with a negatively charged phospholipid surface, which is essential for the conversion of prothrombin to thrombin. Post-translationally, N-glycosylated. N-glycan heterogeneity at Asn-121: Hex3HexNAc3 (minor), Hex4HexNAc3 (minor) and Hex5HexNAc4 (major). At Asn-143: Hex4HexNAc3 (minor) and Hex5HexNAc4 (major). In terms of processing, in the penultimate step of the coagulation cascade, prothrombin is converted to thrombin by the prothrombinase complex composed of factor Xa (F10), cofactor Va (F5), and phospholipids. This activation requires factor Xa-catalyzed sequential cleavage at 2 sites, Arg-314 and Arg-363, along 2 possible pathways. In the first pathway, the first cleavage occurs at Arg-314, leading to the formation of the inactive intermediate prethrombin-2. This pathway preferentially occurs on platelets and in the absence of cofactor Va. In the second pathway, the first cleavage occurs at Arg-363, which separates protease domain into 2 chains that remain connected through a disulfide bond and generates the active intermediate meizothrombin. The presence of cofactor Va directs activation along the meizothrombin pathway and greatly accelerates the rate of cleavage at Arg-363, but has a smaller effect on the cleavage of meizothrombin at Arg-314. Meizothrombin accumulates as an intermediate when prothrombinase is assembled on the membrane of red blood cells. In terms of tissue distribution, expressed by the liver and secreted in plasma.

The protein localises to the secreted. It is found in the extracellular space. The enzyme catalyses Selective cleavage of Arg-|-Gly bonds in fibrinogen to form fibrin and release fibrinopeptides A and B.. Activity is promoted in the presence of negatively charged surfaces, such as polyphosphate and dextran sulfate. Inhibited by SERPINA5. Its function is as follows. Thrombin, which cleaves bonds after Arg and Lys, converts fibrinogen to fibrin and activates factors V, VII, VIII, XIII, and, in complex with thrombomodulin, protein C. Functions in blood homeostasis, inflammation and wound healing. Activates coagulation factor XI (F11); activation is promoted by the contact with negatively charged surfaces. Triggers the production of pro-inflammatory cytokines, such as MCP-1/CCL2 and IL8/CXCL8, in endothelial cells. The sequence is that of Prothrombin (F2) from Homo sapiens (Human).